The sequence spans 186 residues: dCTP deaminase, dUMP-forming (186 aa).

Residues 101–106 (RSSLGR), aspartate 119, 127–129 (TLE), glutamine 148, tyrosine 162, and glutamine 171 each bind dCTP. Glutamate 129 serves as the catalytic Proton donor/acceptor.

The protein belongs to the dCTP deaminase family. As to quaternary structure, homotrimer.

It carries out the reaction dCTP + 2 H2O = dUMP + NH4(+) + diphosphate. Its pathway is pyrimidine metabolism; dUMP biosynthesis; dUMP from dCTP: step 1/1. In terms of biological role, bifunctional enzyme that catalyzes both the deamination of dCTP to dUTP and the hydrolysis of dUTP to dUMP without releasing the toxic dUTP intermediate. This is dCTP deaminase, dUMP-forming from Coprothermobacter proteolyticus (strain ATCC 35245 / DSM 5265 / OCM 4 / BT).